A 134-amino-acid chain; its full sequence is Large ribosomal subunit protein bL20 (134 aa).

It belongs to the bacterial ribosomal protein bL20 family.

Functionally, binds directly to 23S ribosomal RNA and is necessary for the in vitro assembly process of the 50S ribosomal subunit. It is not involved in the protein synthesizing functions of that subunit. This is Large ribosomal subunit protein bL20 from Allorhizobium ampelinum (strain ATCC BAA-846 / DSM 112012 / S4) (Agrobacterium vitis (strain S4)).